A 348-amino-acid polypeptide reads, in one-letter code: Tocopherol O-methyltransferase, chloroplastic (348 aa).

The transit peptide at 1-51 directs the protein to the chloroplast; sequence MKATLAAPSSLTSLPYRTNSSFGSKSSLLFRSPSSSSSVSMTTTRGNVAVA. Ala-52 is modified (N-acetylalanine). The interval 130 to 139 is SAM motif I; that stretch reads VVDVGCGIGG. The SAM motif II stretch occupies residues 193 to 201; the sequence is GKFDLVWSM. Residues 220-229 form an SAM motif III region; that stretch reads VAAPGGRIII.

The protein belongs to the class I-like SAM-binding methyltransferase superfamily. gTMT family.

Its subcellular location is the plastid. The protein localises to the chloroplast. It catalyses the reaction gamma-tocopherol + S-adenosyl-L-methionine = (+)-alpha-tocopherol + S-adenosyl-L-homocysteine + H(+). The catalysed reaction is delta-tocotrienol + S-adenosyl-L-methionine = beta-tocotrienol + S-adenosyl-L-homocysteine + H(+). The enzyme catalyses gamma-tocotrienol + S-adenosyl-L-methionine = alpha-tocotrienol + S-adenosyl-L-homocysteine + H(+). It carries out the reaction delta-tocopherol + S-adenosyl-L-methionine = beta-tocopherol + S-adenosyl-L-homocysteine + H(+). It participates in cofactor biosynthesis; tocopherol biosynthesis. Its function is as follows. Involved in the synthesis of tocopherol (vitamin E). Methylates gamma- and delta-tocopherol to form beta- and alpha-tocopherol, respectively. In Arabidopsis thaliana (Mouse-ear cress), this protein is Tocopherol O-methyltransferase, chloroplastic (VTE4).